Here is a 573-residue protein sequence, read N- to C-terminus: MATLRVSSLLASSPSSLHCNPSVFTKCQSSPRWAFSFSVTPLCSRRSKRIVHCIAGDTLGLTRPNESDAPKISIGAKDTDVVQWQGDLLAIGATENDLARDDNSKFKNPLLQRLDSKLNGLLSAASSEEDFSGKSGQSINLRLPGGRITLVGLGSSASSPTSYHSLGEAAAAAAKSAQARNIAVSLASTDGLSAESKINSASAIATGVMLGIFEDNRFRSESKTPALESLDILGLGTGPEIESKIKYAEHVCAGVILGRELVNAPANIVTPGALAEEAKKIASTYSDVITVNILDAEQCKELKMGAYLGVAAAATENPPYFIHLCFKTNSRERKTKIALVGKGLTFDSGGYNLKTGAGSKIELMKNDMGGAAAVLGAAKALGEIKPRGVEVHFIVAACENMISGAGMRPGDIVTASNGKTIEVNNTDAEGRLTLADALIYACNQGVEKIIDLATLTGAIVTALGPSVAGAFTPSDGLAREVVVAAEASGEKLWRMPMEESYWESMKSGVADMINTGPRDGGAITGALFLKQFVDEKVQWLHLDIAGPVWSDEKKNATGYGVSTLVEWVLRNSL.

The N-terminal 53 residues, 1-53 (MATLRVSSLLASSPSSLHCNPSVFTKCQSSPRWAFSFSVTPLCSRRSKRIVHC), are a transit peptide targeting the chloroplast. Mn(2+) is bound by residues K342 and D347. K354 is a catalytic residue. Mn(2+) contacts are provided by D367, D427, and E429. R431 is an active-site residue.

The protein belongs to the peptidase M17 family. In terms of assembly, homohexamer (dimer of homotrimers). Requires Mn(2+) as cofactor. As to expression, in tubers and floral buds of untreated plants. After abscisic acid (ABA) treatment or mechanical wounding is mostly accumulated in leaves, to a lesser extent in stems, but not in roots.

It is found in the plastid. The protein resides in the chloroplast. It carries out the reaction Release of an N-terminal amino acid, Xaa-|-Yaa-, in which Xaa is preferably Leu, but may be other amino acids including Pro although not Arg or Lys, and Yaa may be Pro. Amino acid amides and methyl esters are also readily hydrolyzed, but rates on arylamides are exceedingly low.. The enzyme catalyses Release of N-terminal proline from a peptide.. Its function is as follows. Presumably involved in the processing and regular turnover of intracellular proteins. In Solanum tuberosum (Potato), this protein is Leucine aminopeptidase, chloroplastic (LAP).